We begin with the raw amino-acid sequence, 512 residues long: Sugar transport protein MST7 (512 aa).

Over 1–17 (MENAGAGDGAPKHYPGK) the chain is Cytoplasmic. Residues 18–38 (MTVFVFIACLVASSGGLIFGY) traverse the membrane as a helical segment. The Extracellular portion of the chain corresponds to 39–81 (DIGISGGVTSMDPFLSRFFPSVYAKEKEVVDTNQYCKFDSEPL). A helical transmembrane segment spans residues 82–102 (TLFTSSLYLAALIASLFASVI). Topologically, residues 103–116 (TRKLGRKMTMLGGG) are cytoplasmic. The chain crosses the membrane as a helical span at residues 117-137 (FIFLIGAVLNGAAVNVAMLII). Topologically, residues 138–139 (GR) are extracellular. The helical transmembrane segment at 140–160 (ILLGIGVGFSIQAVPLYLSEM) threads the bilayer. Residues 161 to 166 (APAKMR) are Cytoplasmic-facing. The chain crosses the membrane as a helical span at residues 167-187 (GMLNIIFQLMITVGILFANLI). Topologically, residues 188 to 201 (NYFTDKIAGGWGWR) are extracellular. A helical transmembrane segment spans residues 202–222 (VSLGLAAVPAVIMTVGSILLP). Residues 223-294 (DTPNSLLSRG…MSVLIPTLQQ (72 aa)) are Cytoplasmic-facing. The chain crosses the membrane as a helical span at residues 295-315 (LTGINVVMFYAPVLFKTIGFG). The Extracellular segment spans residues 316 to 320 (GTASL). The helical transmembrane segment at 321–341 (MSAVITGLVNMFATFVSIATV) threads the bilayer. Residues 342–347 (DRFGRR) lie on the Cytoplasmic side of the membrane. A helical membrane pass occupies residues 348–368 (VLFIQGGIQMIIAQFILGTLI). Residues 369–385 (AVKFGTAGVANISQGYA) lie on the Extracellular side of the membrane. A helical transmembrane segment spans residues 386–406 (IVVVLFICLFVSAFAWSWGPL). Residues 407–425 (GWLVPSEIFPLEIRSAAQS) lie on the Cytoplasmic side of the membrane. Residues 426-446 (VVVVFNMAFTFFIAQIFLMML) form a helical membrane-spanning segment. Residues 447 to 450 (CRLK) are Extracellular-facing. The chain crosses the membrane as a helical span at residues 451-471 (FGLFFFFGAMELIMTGFVLVF). Over 472 to 512 (LPETKGIPIEEMDRIWGEHWYWSRFVGAGRNRVMQMASTNV) the chain is Cytoplasmic.

The protein belongs to the major facilitator superfamily. Sugar transporter (TC 2.A.1.1) family.

Its subcellular location is the membrane. Mediates active uptake of hexoses by sugar:proton symport. The polypeptide is Sugar transport protein MST7 (Oryza sativa subsp. japonica (Rice)).